Reading from the N-terminus, the 388-residue chain is F-box protein At3g49510 (388 aa).

An F-box domain is found at methionine 1–threonine 47.

This chain is F-box protein At3g49510, found in Arabidopsis thaliana (Mouse-ear cress).